The sequence spans 559 residues: Potassium-transporting ATPase potassium-binding subunit (559 aa).

Transmembrane regions (helical) follow at residues 5-25 (GFLL…PLGS), 27-47 (LARL…RILW), 63-83 (LLAL…LLFW), 132-152 (GLTV…FALI), 170-190 (LVRI…LFFI), 253-273 (LAQM…FGEA), 283-303 (LLWA…WAEV), 327-347 (FGVL…CGAV), 356-376 (ALGG…FGGV), 379-399 (GLYG…LMIG), 416-436 (MTAL…ALAM), 484-504 (LLAF…MAIA), and 524-544 (GALF…LTFI).

It belongs to the KdpA family. The system is composed of three essential subunits: KdpA, KdpB and KdpC.

It is found in the cell inner membrane. Functionally, part of the high-affinity ATP-driven potassium transport (or Kdp) system, which catalyzes the hydrolysis of ATP coupled with the electrogenic transport of potassium into the cytoplasm. This subunit binds the periplasmic potassium ions and delivers the ions to the membrane domain of KdpB through an intramembrane tunnel. This is Potassium-transporting ATPase potassium-binding subunit from Salmonella newport (strain SL254).